The primary structure comprises 627 residues: MIYNNTYDVIVVGGGHAGVEAAAASARIGAKTLLLTHNIDTIGQMSCNPAIGGIGKGHLVKEIDAMGGIMAKAIDMAGIQFRILNSRKGPAVRATRAQADRVLYKKAINSLLNDQENLDIFQDSVDDLVVENDTVCGVITKTGIIFKSKKVVLTVGTFLGGKIHIGQVSKEGGRAGDQPSNALAARLRALPFRVDRLKTGTPPRIDSRSVDFSVMDVQHGDTPTPYFSFFSKGKIEHPRQIPCYITYTNSKTHEIITNNLDKSAMYSGLIEGIGPRYCPSIEDKVVRFAEKDRHQIFVEPEGLNSIELYPNGLSTSLPFEVQCEYIRSIKGFENAFIMRPGYAIEYDFFDPRDLKPTLETKHIKNLFFAGQINGTTGYEEAGAQGLVAGINAAISIDSDKSWYPTRSNSYMGVLIDDLITKGTKEPYRMFTSRAEYRLILREDNADLRLSDKACELGLLNKQDQEIFINKKTAIDENIAIMKNTWIGPQTQKARDLEKFLDKKMTRESTLFDLLKRPELDYKKLQQIPDTNLKLEDESVIEQIEISAKYSGYIERQSKDIAKISTLESKTIPESFDYSQVKGLSNEVLQKLSEQKPTTLGEASRIPGVTPAAVSLLTIYMKKTGFIK.

FAD contacts are provided by residues 13 to 18 (GGGHAG), Val125, and Ser180. Residue 274–288 (GPRYCPSIEDKVVRF) participates in NAD(+) binding. Residue Gln371 participates in FAD binding.

The protein belongs to the MnmG family. In terms of assembly, homodimer. Heterotetramer of two MnmE and two MnmG subunits. FAD serves as cofactor.

The protein resides in the cytoplasm. In terms of biological role, NAD-binding protein involved in the addition of a carboxymethylaminomethyl (cmnm) group at the wobble position (U34) of certain tRNAs, forming tRNA-cmnm(5)s(2)U34. The chain is tRNA uridine 5-carboxymethylaminomethyl modification enzyme MnmG from Francisella philomiragia subsp. philomiragia (strain ATCC 25017 / CCUG 19701 / FSC 153 / O#319-036).